The primary structure comprises 86 residues: Large ribosomal subunit protein bL27 (86 aa).

The disordered stretch occupies residues 1 to 24 (MAHKKAMGSTENTRDSNPSYLGVK). Residues 9-19 (STENTRDSNPS) are compositionally biased toward polar residues.

This sequence belongs to the bacterial ribosomal protein bL27 family.

This Salinibacter ruber (strain DSM 13855 / M31) protein is Large ribosomal subunit protein bL27.